We begin with the raw amino-acid sequence, 185 residues long: Ribosome-recycling factor (185 aa).

This sequence belongs to the RRF family.

The protein resides in the cytoplasm. Functionally, responsible for the release of ribosomes from messenger RNA at the termination of protein biosynthesis. May increase the efficiency of translation by recycling ribosomes from one round of translation to another. This Clostridium acetobutylicum (strain ATCC 824 / DSM 792 / JCM 1419 / IAM 19013 / LMG 5710 / NBRC 13948 / NRRL B-527 / VKM B-1787 / 2291 / W) protein is Ribosome-recycling factor.